Reading from the N-terminus, the 127-residue chain is Holo-[acyl-carrier-protein] synthase (127 aa).

The Mg(2+) site is built by D9 and E58.

The protein belongs to the P-Pant transferase superfamily. AcpS family. Requires Mg(2+) as cofactor.

Its subcellular location is the cytoplasm. It carries out the reaction apo-[ACP] + CoA = holo-[ACP] + adenosine 3',5'-bisphosphate + H(+). Its function is as follows. Transfers the 4'-phosphopantetheine moiety from coenzyme A to a Ser of acyl-carrier-protein. This chain is Holo-[acyl-carrier-protein] synthase, found in Shewanella sp. (strain ANA-3).